Reading from the N-terminus, the 911-residue chain is Inositol 1,4,5-triphosphate receptor associated 1 (911 aa).

Over residues 1 to 11 (MVKAPQSEERL) the composition is skewed to basic and acidic residues. Disordered regions lie at residues 1 to 21 (MVKAPQSEERLAGGGKGNNSV), 39 to 122 (EVPG…HRHL), 174 to 405 (LTRR…GPRL), and 478 to 498 (EQEKGHPSELSSAIEEEESKG). Residues 68–86 (AAQSPAGQDPATTGISCSP) are compositionally biased toward polar residues. Basic residues predominate over residues 111-122 (HSPHRRLSHRHL). Serine 118 carries the phosphoserine modification. Positions 152–184 (SEEDKKKNLALLEEAKLVSERFLTRRGRKSRSS) are interaction with PRKG1. A compositionally biased stretch (polar residues) spans 183–212 (SSPGESSPAVSPNLSPGASPASSQSNSLTV). Residues 277–292 (TVEKSKEITIEQKENF) show a composition bias toward basic and acidic residues. Phosphoserine is present on serine 393. The tract at residues 534 to 580 (NVFVQLSLAFRNDSYTLESRINQAERERNLTEENTEKELENFKASIT) is interaction with ITPR1. Residues 547 to 645 (SYTLESRINQ…MQYVENLKRT (99 aa)) are a coiled coil. Phosphoserine occurs at positions 683 and 696. Disordered stretches follow at residues 706 to 766 (LNLP…TPSC) and 787 to 829 (YQEG…KEQR). Over residues 708 to 728 (LPGQSPSSSPIPSLPALSESS) the composition is skewed to low complexity. The span at 790–801 (GLKKTKELQGLR) shows a compositional bias: basic and acidic residues. Residues 802–825 (EEEEEQKSESPEEPEEVAETEEEE) show a composition bias toward acidic residues. Residues 853 to 873 (VIWMMAAAMLVLTVVLGLYGS) traverse the membrane as a helical segment.

As to quaternary structure, interacts with PRKG1/cGKI-beta and ITPR1/IP3R type I. Part of cGMP kinase signaling complex at least composed of ACTA2/alpha-actin, CNN1/calponin H1, PLN/phospholamban, PRKG1 and ITPR1. Interacts with HCN4; regulates HCN4 channel activity. Phosphorylated by PRKG1/cGKI-beta. Phosphorylation at Ser-696 is necessary for PRKG1-induced calcium release in the cytosol. In terms of tissue distribution, highly expressed in trachea, aorta and uterus.

Its subcellular location is the sarcoplasmic reticulum. The protein resides in the cytoplasm. It is found in the perinuclear region. It localises to the membrane. Its function is as follows. Plays a role as NO/PRKG1-dependent regulator of IP3-induced calcium release; its phosphorylation by PRKG1 inhibits bradykinin and IP3-induced calcium release from intracellular stores. Recruits PRKG1 to the endoplasmic reticulum and may mediate the assembly of PRKG1 and ITPR1 in a macrocomplex. Involved in PRKG1 signaling cascade leading to inhibition of platelet activation and aggregation. Also mediates NO-dependent inhibition of calcium signaling in gastrointestinal smooth muscle contributing to NO-dependent relaxation. Plays a role in the regulation of cellular excitability by regulating the hyperpolarization-activated cyclic nucleotide-gated HCN4 channel activity. The sequence is that of Inositol 1,4,5-triphosphate receptor associated 1 (IRAG1) from Bos taurus (Bovine).